Consider the following 139-residue polypeptide: Endoribonuclease YbeY (139 aa).

The Zn(2+) site is built by His99, His103, and His109.

Belongs to the endoribonuclease YbeY family. It depends on Zn(2+) as a cofactor.

It localises to the cytoplasm. Functionally, single strand-specific metallo-endoribonuclease involved in late-stage 70S ribosome quality control and in maturation of the 3' terminus of the 16S rRNA. The protein is Endoribonuclease YbeY of Nautilia profundicola (strain ATCC BAA-1463 / DSM 18972 / AmH).